We begin with the raw amino-acid sequence, 317 residues long: Glycerol-3-phosphate dehydrogenase [NAD(P)+] (317 aa).

NADPH-binding residues include tryptophan 20, arginine 40, arginine 41, and lysine 88. Lysine 88 and glycine 116 together coordinate sn-glycerol 3-phosphate. Serine 120 serves as a coordination point for NADPH. Residues lysine 171, aspartate 224, serine 234, arginine 235, and asparagine 236 each contribute to the sn-glycerol 3-phosphate site. Lysine 171 (proton acceptor) is an active-site residue. NADPH is bound at residue arginine 235. Residue glutamate 261 coordinates NADPH.

This sequence belongs to the NAD-dependent glycerol-3-phosphate dehydrogenase family.

It localises to the cytoplasm. It carries out the reaction sn-glycerol 3-phosphate + NAD(+) = dihydroxyacetone phosphate + NADH + H(+). It catalyses the reaction sn-glycerol 3-phosphate + NADP(+) = dihydroxyacetone phosphate + NADPH + H(+). It participates in membrane lipid metabolism; glycerophospholipid metabolism. Functionally, catalyzes the reduction of the glycolytic intermediate dihydroxyacetone phosphate (DHAP) to sn-glycerol 3-phosphate (G3P), the key precursor for phospholipid synthesis. In Synechocystis sp. (strain ATCC 27184 / PCC 6803 / Kazusa), this protein is Glycerol-3-phosphate dehydrogenase [NAD(P)+].